The sequence spans 122 residues: Large ribosomal subunit protein bL12 (122 aa).

Belongs to the bacterial ribosomal protein bL12 family. In terms of assembly, homodimer. Part of the ribosomal stalk of the 50S ribosomal subunit. Forms a multimeric L10(L12)X complex, where L10 forms an elongated spine to which 2 to 4 L12 dimers bind in a sequential fashion. Binds GTP-bound translation factors.

Forms part of the ribosomal stalk which helps the ribosome interact with GTP-bound translation factors. Is thus essential for accurate translation. This chain is Large ribosomal subunit protein bL12, found in Borrelia hermsii (strain HS1 / DAH).